A 405-amino-acid polypeptide reads, in one-letter code: Probable tRNA sulfurtransferase (405 aa).

One can recognise a THUMP domain in the interval Glu60 to Val165. ATP-binding positions include Met183–Leu184, His208–Phe209, Arg265, Gly287, and Gln296.

The protein belongs to the ThiI family.

It is found in the cytoplasm. It catalyses the reaction [ThiI sulfur-carrier protein]-S-sulfanyl-L-cysteine + a uridine in tRNA + 2 reduced [2Fe-2S]-[ferredoxin] + ATP + H(+) = [ThiI sulfur-carrier protein]-L-cysteine + a 4-thiouridine in tRNA + 2 oxidized [2Fe-2S]-[ferredoxin] + AMP + diphosphate. It carries out the reaction [ThiS sulfur-carrier protein]-C-terminal Gly-Gly-AMP + S-sulfanyl-L-cysteinyl-[cysteine desulfurase] + AH2 = [ThiS sulfur-carrier protein]-C-terminal-Gly-aminoethanethioate + L-cysteinyl-[cysteine desulfurase] + A + AMP + 2 H(+). It functions in the pathway cofactor biosynthesis; thiamine diphosphate biosynthesis. Catalyzes the ATP-dependent transfer of a sulfur to tRNA to produce 4-thiouridine in position 8 of tRNAs, which functions as a near-UV photosensor. Also catalyzes the transfer of sulfur to the sulfur carrier protein ThiS, forming ThiS-thiocarboxylate. This is a step in the synthesis of thiazole, in the thiamine biosynthesis pathway. The sulfur is donated as persulfide by IscS. This Latilactobacillus sakei subsp. sakei (strain 23K) (Lactobacillus sakei subsp. sakei) protein is Probable tRNA sulfurtransferase.